The chain runs to 324 residues: Serine carboxypeptidase II-1 (324 aa).

Asn10 is a glycosylation site (N-linked (GlcNAc...) asparagine). Residue Ser41 is part of the active site. 2 cysteine pairs are disulfide-bonded: Cys109/Cys121 and Cys145/Cys170. Positions 150–162 are cleaved as a propeptide — linker peptide; sequence LHRRRLIKGRRPW. N-linked (GlcNAc...) asparagine glycosylation is present at Asn191. Residues Asp239 and His291 contribute to the active site.

The protein belongs to the peptidase S10 family. As to quaternary structure, carboxypeptidase II is a dimer, where each monomer is composed of two chains linked by a disulfide bond. Post-translationally, the linker peptide is endoproteolytically excised during enzyme maturation.

It catalyses the reaction Preferential release of a C-terminal arginine or lysine residue.. This Hordeum vulgare (Barley) protein is Serine carboxypeptidase II-1 (CXP;2-1).